Consider the following 602-residue polypeptide: Elongation factor 4 (602 aa).

The tr-type G domain occupies 7–189 (SRLRNFCIIA…AVVERVPPPK (183 aa)). GTP-binding positions include 19–24 (DHGKST) and 136–139 (NKVD).

This sequence belongs to the TRAFAC class translation factor GTPase superfamily. Classic translation factor GTPase family. LepA subfamily.

It localises to the cell inner membrane. The catalysed reaction is GTP + H2O = GDP + phosphate + H(+). Its function is as follows. Required for accurate and efficient protein synthesis under certain stress conditions. May act as a fidelity factor of the translation reaction, by catalyzing a one-codon backward translocation of tRNAs on improperly translocated ribosomes. Back-translocation proceeds from a post-translocation (POST) complex to a pre-translocation (PRE) complex, thus giving elongation factor G a second chance to translocate the tRNAs correctly. Binds to ribosomes in a GTP-dependent manner. This is Elongation factor 4 from Prochlorococcus marinus (strain MIT 9211).